Here is a 603-residue protein sequence, read N- to C-terminus: UvrABC system protein C (603 aa).

A GIY-YIG domain is found at 13–92 (NGPGVYLMKD…IRKHKPRYNI (80 aa)). In terms of domain architecture, UVR spans 202–237 (NDLLQKIKEQMAAASERQEYELAARLRDRMFAIQAT).

It belongs to the UvrC family. In terms of assembly, interacts with UvrB in an incision complex.

It localises to the cytoplasm. Its function is as follows. The UvrABC repair system catalyzes the recognition and processing of DNA lesions. UvrC both incises the 5' and 3' sides of the lesion. The N-terminal half is responsible for the 3' incision and the C-terminal half is responsible for the 5' incision. This chain is UvrABC system protein C, found in Desulfatibacillum aliphaticivorans.